Consider the following 223-residue polypeptide: Cytotoxic T-lymphocyte protein 4 (223 aa).

The N-terminal stretch at 1–35 (MACLGFQRHKAQLNLATRTWPCTLLFFLLFIPVFC) is a signal peptide. Over 36–161 (KAMHVAQPAV…IDPEPCPDSD (126 aa)) the chain is Extracellular. The Ig-like V-type domain occupies 39–140 (HVAQPAVVLA…VELMYPPPYY (102 aa)). The homodimerization stretch occupies residues 46 to 50 (VLASS). Disulfide bonds link Cys58/Cys129 and Cys85/Cys103. Residue Asn113 is glycosylated (N-linked (GlcNAc...) asparagine). An important for interaction with CD80 and CD86 region spans residues 134–139 (MYPPPY). Asn145 carries N-linked (GlcNAc...) asparagine glycosylation. The tract at residues 150–155 (YVIDPE) is homodimerization. The helical transmembrane segment at 162-182 (FLLWILAAVSSGLFFYSFLLT) threads the bilayer. At 183-223 (AVSLSKMLKKRSPLTTGVYVKMPPTEPECEKQFQPYFIPIN) the chain is on the cytoplasmic side. A Phosphotyrosine; by TXK and JAK2 modification is found at Tyr201.

Homodimer; disulfide-linked. Binds to CD80/B7-1 and CD86/B7.2. Interacts with ICOSLG. In terms of processing, N-glycosylation is important for dimerization. Post-translationally, phosphorylation at Tyr-201 prevents binding to the AP-2 adapter complex, blocks endocytosis, and leads to retention of CTLA4 on the cell surface. Widely expressed with highest levels in lymphoid tissues. Detected in activated T-cells where expression levels are 30- to 50-fold less than CD28, the stimulatory coreceptor, on the cell surface following activation.

The protein resides in the cell membrane. Inhibitory receptor acting as a major negative regulator of T-cell responses. The affinity of CTLA4 for its natural B7 family ligands, CD80 and CD86, is considerably stronger than the affinity of their cognate stimulatory coreceptor CD28. This chain is Cytotoxic T-lymphocyte protein 4 (CTLA4), found in Homo sapiens (Human).